The primary structure comprises 179 residues: Large ribosomal subunit protein bL9 (179 aa).

The segment at 156–179 is disordered; it reads PEGAPVPVAEEPAAEAEQAEVAAE. The span at 157–166 shows a compositional bias: low complexity; that stretch reads EGAPVPVAEE. The segment covering 167-179 has biased composition (acidic residues); that stretch reads PAAEAEQAEVAAE.

This sequence belongs to the bacterial ribosomal protein bL9 family.

In terms of biological role, binds to the 23S rRNA. The chain is Large ribosomal subunit protein bL9 from Porphyromonas gingivalis (strain ATCC 33277 / DSM 20709 / CIP 103683 / JCM 12257 / NCTC 11834 / 2561).